The primary structure comprises 352 residues: Thiamine-monophosphate kinase (352 aa).

3 residues coordinate Mg(2+): aspartate 58, threonine 73, and aspartate 75. Histidine 82 is a substrate binding site. Residues aspartate 103 and aspartate 151 each contribute to the Mg(2+) site. Residues 150–151 and arginine 177 contribute to the ATP site; that span reads GD. Mg(2+) is bound at residue aspartate 239. Serine 241 serves as a coordination point for ATP. Aspartate 242 contributes to the Mg(2+) binding site. Residues aspartate 294 and tryptophan 349 each contribute to the substrate site.

This sequence belongs to the thiamine-monophosphate kinase family.

It carries out the reaction thiamine phosphate + ATP = thiamine diphosphate + ADP. The protein operates within cofactor biosynthesis; thiamine diphosphate biosynthesis; thiamine diphosphate from thiamine phosphate: step 1/1. In terms of biological role, catalyzes the ATP-dependent phosphorylation of thiamine-monophosphate (TMP) to form thiamine-pyrophosphate (TPP), the active form of vitamin B1. This Caulobacter vibrioides (strain ATCC 19089 / CIP 103742 / CB 15) (Caulobacter crescentus) protein is Thiamine-monophosphate kinase.